Reading from the N-terminus, the 174-residue chain is B3 domain-containing protein At2g31862 (174 aa).

The segment at residues 1–71 is a DNA-binding region (TF-B3); the sequence is MWVNLSCMCH…KLYIALVPLD (71 aa).

The protein localises to the nucleus. The polypeptide is B3 domain-containing protein At2g31862 (Arabidopsis thaliana (Mouse-ear cress)).